The sequence spans 287 residues: Protease HtpX (287 aa).

Helical transmembrane passes span Ile4–Ile24 and Gly33–Ile53. Zn(2+) is bound at residue His139. Residue Glu140 is part of the active site. His143 provides a ligand contact to Zn(2+). Helical transmembrane passes span Leu154 to Ile174 and Ala195 to Phe215. A Zn(2+)-binding site is contributed by Glu220.

It belongs to the peptidase M48B family. Zn(2+) serves as cofactor.

The protein resides in the cell inner membrane. The protein is Protease HtpX of Shewanella baltica (strain OS185).